A 165-amino-acid chain; its full sequence is uncharacterized protein (165 aa).

Residues 1-165 (MDIKVVKGSI…EAWEKVLGLR (165 aa)) form the Macro domain.

This is an uncharacterized protein from Aquifex aeolicus (strain VF5).